Consider the following 655-residue polypeptide: Probable replication factor A 73 kDa subunit (655 aa).

Residues 195–217 (NRAAAPEATRARAVPPPARRTAS) are disordered. Residues 196–207 (RAAAPEATRARA) are compositionally biased toward low complexity. The OB DNA-binding region spans 236–326 (FKIHGMVSRK…TLRSDSIIEA (91 aa)). The C4-type zinc-finger motif lies at 518-539 (CASEGCQKKLVGENGDYRCEKC).

The protein belongs to the replication factor A protein 1 family. In terms of assembly, component of the heterotrimeric canonical replication protein A complex (RPA).

The protein resides in the nucleus. Its function is as follows. As part of the heterotrimeric replication protein A complex (RPA/RP-A), binds and stabilizes single-stranded DNA intermediates, that form during DNA replication or upon DNA stress. It prevents their reannealing and in parallel, recruits and activates different proteins and complexes involved in DNA metabolism. Thereby, it plays an essential role both in DNA replication and the cellular response to DNA damage. The sequence is that of Probable replication factor A 73 kDa subunit from Caenorhabditis elegans.